The primary structure comprises 495 residues: Cytochrome P450 94C1 (495 aa).

Residues 2-22 (LLIISFTIVSFFFIIIFSLFH) traverse the membrane as a helical segment. Cys439 is a heme binding site.

The protein belongs to the cytochrome P450 family. The cofactor is heme.

The protein resides in the membrane. Its subcellular location is the endoplasmic reticulum membrane. The enzyme catalyses a 12-hydroxyjasmonyl-L-alpha-amino acid + 2 reduced [NADPH--hemoprotein reductase] + 2 O2 = a 12-hydroxy-12-oxojasmonyl-L-alpha-amino acid + 2 oxidized [NADPH--hemoprotein reductase] + 3 H2O + 3 H(+). Involved in the oxidation of the plant hormone jasmonoyl-L-isoleucine (JA-Ile), a bioactive phytohormone of the jasmonate-mediated signaling pathway. Converts 12-hydroxy-JA-Ile (12OH-JA-Ile) to the carboxy-derivative 12COOH-JA-Ile. Exerts negative feedback control on JA-Ile levels and plays a role in attenuation of jasmonate responses. Also functions as in-chain fatty acids hydroxylase in vitro. Catalyzes the hydroxylation of 12-hydroxy-jasmonoyl-L-phenylalanine (12OH-JA-Phe) in vitro. Converts 12OH-JA-Phe to the carboxy-derivative 12COOH-JA-Phe. The chain is Cytochrome P450 94C1 from Arabidopsis thaliana (Mouse-ear cress).